We begin with the raw amino-acid sequence, 439 residues long: Fibulin-7 (439 aa).

A signal peptide spans 1-24; sequence MVPSSPRALFLLLLILACPEPRAS. A coiled-coil region spans residues 28–53; it reads LSKQQLLSAIRQLQQLLKGQETRFAE. The Sushi domain occupies 79 to 136; sequence VSCPALNTPADGRKFGSKYLVDHEVHFTCNPGFRLVGPSSVVCLPNGTWTGEQPHCRG. 11 disulfides stabilise this stretch: Cys-81-Cys-121, Cys-107-Cys-134, Cys-140-Cys-151, Cys-145-Cys-160, Cys-162-Cys-171, Cys-228-Cys-244, Cys-240-Cys-253, Cys-255-Cys-268, Cys-274-Cys-287, Cys-281-Cys-296, and Cys-301-Cys-318. Residue Asn-124 is glycosylated (N-linked (GlcNAc...) asparagine). The 37-residue stretch at 136–172 folds into the EGF-like 1; calcium-binding domain; sequence GISECSSQPCQNGGTCVEGVNQYRCICPPGRTGNRCQ. The EGF-like 2; calcium-binding domain occupies 224-269; the sequence is DVNECELYGQEGRPRLCMHACVNTPGSYRCTCPGGYRTLADGKSCE. Positions 270–319 constitute an EGF-like 3; calcium-binding domain; sequence DVDECVGLQPVCPQGTTCINTGGSFQCVSPECPEGSGNVSYVKTSPFQCE. N-linked (GlcNAc...) asparagine glycosylation occurs at Asn-307.

It belongs to the fibulin family. In terms of assembly, interacts with heparin, FBLN1, FN1 and DSPP. Preferentially binds dental mesenchyme cells and odontoblasts but not dental epithelial cells or nondental cells. Binding requires a heparan sulfate-containing receptor on the cell surface as well as an integrin. N-glycosylated.

It is found in the secreted. It localises to the extracellular space. Its subcellular location is the extracellular matrix. An adhesion molecule that interacts with extracellular matrix molecules in developing teeth and may play important roles in differentiation and maintenance of odontoblasts as well as in dentin formation. This chain is Fibulin-7 (FBLN7), found in Homo sapiens (Human).